A 414-amino-acid polypeptide reads, in one-letter code: MQLVVVGAHQRTAPISIRERIAFAEAELAQALSSLRQIAVEGFILSTCNRVELYALVEEADGGRSLRQFLAQQRSIDLDELMPHVYTYLDEDAVRHLFRVASGLDSMALGEAQILSQIKTAYNAAQQTELLGTTMHRLIQAALTTGKLVRTETQLAHAQLSVVSVGLSLARQHLDLTNRSVVIIGAGRTGELALKHYLEYTSNITVLSRTFERAARLAEHHKVAAKPISELAAVLQASDVVISCTSSPELMLDFEQAQLLQAQRQRQWVLLDLAVPRDIDRHVGALPEVWLYDVDDMQAICERNRASKAAEVAGAEAIVERELIKWQEWWLTQAVLPTIRALRAHAEAIRLAELERTLARLDLSEQQQQAVSALTSAIINKLLHQPMRAIKDTAASPQLAHAAQQLFRLDFEAI.

Substrate contacts are provided by residues 47-50 (TCNR), serine 106, 111-113 (EAQ), and glutamine 117. Catalysis depends on cysteine 48, which acts as the Nucleophile. Residue 185-190 (GAGRTG) coordinates NADP(+).

The protein belongs to the glutamyl-tRNA reductase family. As to quaternary structure, homodimer.

The enzyme catalyses (S)-4-amino-5-oxopentanoate + tRNA(Glu) + NADP(+) = L-glutamyl-tRNA(Glu) + NADPH + H(+). It functions in the pathway porphyrin-containing compound metabolism; protoporphyrin-IX biosynthesis; 5-aminolevulinate from L-glutamyl-tRNA(Glu): step 1/2. Its function is as follows. Catalyzes the NADPH-dependent reduction of glutamyl-tRNA(Glu) to glutamate 1-semialdehyde (GSA). The polypeptide is Glutamyl-tRNA reductase (Herpetosiphon aurantiacus (strain ATCC 23779 / DSM 785 / 114-95)).